We begin with the raw amino-acid sequence, 87 residues long: Small ribosomal subunit protein bS16c (87 aa).

Belongs to the bacterial ribosomal protein bS16 family.

The protein resides in the plastid. It is found in the chloroplast. This Zygnema circumcarinatum (Green alga) protein is Small ribosomal subunit protein bS16c.